A 124-amino-acid polypeptide reads, in one-letter code: Large ribosomal subunit protein bL12 (124 aa).

This sequence belongs to the bacterial ribosomal protein bL12 family. Homodimer. Part of the ribosomal stalk of the 50S ribosomal subunit. Forms a multimeric L10(L12)X complex, where L10 forms an elongated spine to which 2 to 4 L12 dimers bind in a sequential fashion. Binds GTP-bound translation factors.

In terms of biological role, forms part of the ribosomal stalk which helps the ribosome interact with GTP-bound translation factors. Is thus essential for accurate translation. This Burkholderia thailandensis (strain ATCC 700388 / DSM 13276 / CCUG 48851 / CIP 106301 / E264) protein is Large ribosomal subunit protein bL12.